Reading from the N-terminus, the 185-residue chain is Protein GrpE (185 aa).

The tract at residues 1–22 is disordered; it reads MTASQEPVDQAPESNEPAPAVP.

The protein belongs to the GrpE family. In terms of assembly, homodimer.

The protein localises to the cytoplasm. Its function is as follows. Participates actively in the response to hyperosmotic and heat shock by preventing the aggregation of stress-denatured proteins, in association with DnaK and GrpE. It is the nucleotide exchange factor for DnaK and may function as a thermosensor. Unfolded proteins bind initially to DnaJ; upon interaction with the DnaJ-bound protein, DnaK hydrolyzes its bound ATP, resulting in the formation of a stable complex. GrpE releases ADP from DnaK; ATP binding to DnaK triggers the release of the substrate protein, thus completing the reaction cycle. Several rounds of ATP-dependent interactions between DnaJ, DnaK and GrpE are required for fully efficient folding. This is Protein GrpE from Bordetella petrii (strain ATCC BAA-461 / DSM 12804 / CCUG 43448).